A 130-amino-acid chain; its full sequence is RutC family protein in leuC 5'region (130 aa).

The protein belongs to the RutC family.

The chain is RutC family protein in leuC 5'region from Leuconostoc mesenteroides subsp. cremoris.